The following is a 511-amino-acid chain: 2-methylbutanal oxime monooxygenase (511 aa).

The next 2 helical transmembrane spans lie at 10–30 and 304–324; these read PPQW…LLLF and ILMN…TWAF. Position 451 (Cys451) interacts with heme.

Belongs to the cytochrome P450 family. The cofactor is heme. In terms of tissue distribution, expressed in storage roots, primary roots, petioles and vascular tissues. Expressed in the outer cortex cells, the endodermis and around the xylem, phloem cells and laticifers.

The protein resides in the microsome membrane. It carries out the reaction (1E,2S)-2-methylbutanal oxime + reduced [NADPH--hemoprotein reductase] + O2 = 2-hydroxy-2-methylbutanenitrile + oxidized [NADPH--hemoprotein reductase] + 2 H2O + H(+). The catalysed reaction is (E)-2-methylpropanal oxime + reduced [NADPH--hemoprotein reductase] + O2 = 2-hydroxy-2-methylpropanenitrile + oxidized [NADPH--hemoprotein reductase] + 2 H2O + H(+). Catalyzes the conversion of (E)-2-methylpropanal oxime (valox) to 2-hydroxy-2-methylpropanenitrile (acetone cyanohydrin) and of (E)-2-methylbutanal oxime (ilox) to 2-hydroxy-2-methylbutyronitrile. The reaction takes place in three steps. First, the oxime is isomerized to the (Z)- isomer, next the (Z)-isomer is dehydrated to the corresponding nitrile, followed by a C-hydroxylation of the nitrile. Can use both aliphatic and aromatic oximes as substrates. This chain is 2-methylbutanal oxime monooxygenase (CYP71E7), found in Manihot esculenta (Cassava).